The primary structure comprises 131 residues: Small ribosomal subunit protein bS6 (131 aa).

This sequence belongs to the bacterial ribosomal protein bS6 family.

Binds together with bS18 to 16S ribosomal RNA. This chain is Small ribosomal subunit protein bS6, found in Borrelia hermsii (strain HS1 / DAH).